We begin with the raw amino-acid sequence, 697 residues long: Elongation factor G (697 aa).

Residues 8-290 (ERYRNIGISA…AVLDFLPSPV (283 aa)) enclose the tr-type G domain. GTP contacts are provided by residues 17–24 (AHIDAGKT), 88–92 (DTPGH), and 142–145 (NKMD).

Belongs to the TRAFAC class translation factor GTPase superfamily. Classic translation factor GTPase family. EF-G/EF-2 subfamily.

Its subcellular location is the cytoplasm. In terms of biological role, catalyzes the GTP-dependent ribosomal translocation step during translation elongation. During this step, the ribosome changes from the pre-translocational (PRE) to the post-translocational (POST) state as the newly formed A-site-bound peptidyl-tRNA and P-site-bound deacylated tRNA move to the P and E sites, respectively. Catalyzes the coordinated movement of the two tRNA molecules, the mRNA and conformational changes in the ribosome. The sequence is that of Elongation factor G from Methylobacillus flagellatus (strain ATCC 51484 / DSM 6875 / VKM B-1610 / KT).